We begin with the raw amino-acid sequence, 88 residues long: Small ribosomal subunit protein bS16 (88 aa).

It belongs to the bacterial ribosomal protein bS16 family.

This is Small ribosomal subunit protein bS16 from Leptospira interrogans serogroup Icterohaemorrhagiae serovar Lai (strain 56601).